Here is a 217-residue protein sequence, read N- to C-terminus: Monomethylamine corrinoid protein 2 (217 aa).

Residues 1-91 enclose the B12-binding N-terminal domain; the sequence is MTNTEIFEKL…ELEKSKVEGE (91 aa). Positions 93 to 217 constitute a B12-binding domain; it reads TGLAITFVAE…AAKVALNIMK (125 aa). His-106 contributes to the methylcob(III)alamin binding site.

It belongs to the methylamine corrinoid protein family. In terms of assembly, can form a complex with MtmB.

It participates in one-carbon metabolism; methanogenesis from methylamine. Acts as a methyl group carrier between MtmB and MtbA. This chain is Monomethylamine corrinoid protein 2 (mtmC2), found in Methanosarcina acetivorans (strain ATCC 35395 / DSM 2834 / JCM 12185 / C2A).